A 101-amino-acid polypeptide reads, in one-letter code: Urease subunit beta (101 aa).

This sequence belongs to the urease beta subunit family. As to quaternary structure, heterotrimer of UreA (gamma), UreB (beta) and UreC (alpha) subunits. Three heterotrimers associate to form the active enzyme.

It is found in the cytoplasm. It catalyses the reaction urea + 2 H2O + H(+) = hydrogencarbonate + 2 NH4(+). Its pathway is nitrogen metabolism; urea degradation; CO(2) and NH(3) from urea (urease route): step 1/1. The protein is Urease subunit beta of Ralstonia nicotianae (strain ATCC BAA-1114 / GMI1000) (Ralstonia solanacearum).